The chain runs to 502 residues: Probable cytosol aminopeptidase (502 aa).

Residues lysine 267 and aspartate 272 each coordinate Mn(2+). Lysine 279 is a catalytic residue. Aspartate 290, aspartate 349, and glutamate 351 together coordinate Mn(2+). The active site involves arginine 353.

It belongs to the peptidase M17 family. Mn(2+) serves as cofactor.

The protein localises to the cytoplasm. It carries out the reaction Release of an N-terminal amino acid, Xaa-|-Yaa-, in which Xaa is preferably Leu, but may be other amino acids including Pro although not Arg or Lys, and Yaa may be Pro. Amino acid amides and methyl esters are also readily hydrolyzed, but rates on arylamides are exceedingly low.. It catalyses the reaction Release of an N-terminal amino acid, preferentially leucine, but not glutamic or aspartic acids.. Its function is as follows. Presumably involved in the processing and regular turnover of intracellular proteins. Catalyzes the removal of unsubstituted N-terminal amino acids from various peptides. The chain is Probable cytosol aminopeptidase from Aeromonas hydrophila subsp. hydrophila (strain ATCC 7966 / DSM 30187 / BCRC 13018 / CCUG 14551 / JCM 1027 / KCTC 2358 / NCIMB 9240 / NCTC 8049).